The chain runs to 736 residues: Na(+)/H(+) antiporter NhaA (736 aa).

Residues 1–387 form a na(+)/H(+) antiporter NhaA region; the sequence is MNHSPQSARP…ICGYLLLRAA (387 aa). 11 helical membrane passes run 23–43, 58–78, 96–116, 126–146, 155–175, 178–198, 201–221, 265–285, 298–318, 334–354, and 367–387; these read AGGI…NSPF, LSLA…LVGL, MLPG…FAVL, GWAV…SLLG, VFLA…IAIF, AEIS…LFVM, MDVV…FFVF, VAFI…FKGL, ILLG…WLAI, LYGV…IGLL, and IGVL…LRAA. The tract at residues 388–736 is peptidase S49; that stretch reads RPDQSAANPL…EKAIWARYGL (349 aa).

It in the N-terminal section; belongs to the NhaA Na(+)/H(+) (TC 2.A.33) antiporter family. This sequence in the C-terminal section; belongs to the peptidase S49 family.

It localises to the cell inner membrane. It catalyses the reaction Na(+)(in) + 2 H(+)(out) = Na(+)(out) + 2 H(+)(in). Functionally, na(+)/H(+) antiporter that extrudes sodium in exchange for external protons. The sequence is that of Na(+)/H(+) antiporter NhaA from Brucella melitensis biotype 1 (strain ATCC 23456 / CCUG 17765 / NCTC 10094 / 16M).